The following is a 1888-amino-acid chain: Eukaryotic translation initiation factor 4G (1888 aa).

Disordered regions lie at residues 1–259 (MSFN…PTTP), 391–420 (FDNK…TQPL), 449–662 (PLPS…SLQH), 726–761 (VAHS…KNSE), 838–903 (ADVS…DGEV), 961–1042 (AYKR…SGDR), 1083–1138 (TNVS…DPRL), 1331–1356 (GERE…EREE), 1462–1605 (KWQQ…PGDL), and 1639–1691 (RFAG…PSLP). Composition is skewed to polar residues over residues 13 to 36 (GYTQ…SGTH) and 75 to 84 (VNSTDSSNAP). Positions 171–183 (DEQKRDQARHESF) are enriched in basic and acidic residues. Pro residues predominate over residues 185–195 (PVPPMPIPLAP). 4 stretches are compositionally biased toward polar residues: residues 211 to 231 (NVGQ…NTGD), 244 to 259 (ASPN…PTTP), 393 to 405 (NKQS…TGTS), and 458 to 475 (NSQP…SQNV). Residues 497-506 (PNREHTRDTH) show a composition bias toward basic and acidic residues. Residues 586–596 (IKSSPVISKQF) show a composition bias toward polar residues. Residues 603 to 630 (VSLESQDSSSVQSSLTASSEESELAVAH) are compositionally biased toward low complexity. A compositionally biased stretch (basic and acidic residues) spans 631–645 (SEVRRENLLGSDLHK). Positions 840 to 850 (VSASVSSSSTV) are enriched in low complexity. Positions 869-885 (NMSSNEVLKNVVKSDQP) are enriched in polar residues. Residues 963–983 (KRPEEKKETVAHSESIERTES) are compositionally biased toward basic and acidic residues. The tract at residues 1048 to 1093 (KKYSRDFLLKFAEQFLDLPHNFEVTSDIESLMSTHTNVSHHHDRDP) is EIF4E-binding. Over residues 1109-1124 (RLDRRGSNLVDDDRWS) the composition is skewed to basic and acidic residues. Positions 1239-1462 (QRQLKAILNK…KDAIDLRKNK (224 aa)) constitute an MIF4G domain. Composition is skewed to basic and acidic residues over residues 1467 to 1484 (RKVE…DAAQ) and 1661 to 1674 (KDLR…DRSR). The region spanning 1700-1824 (RLQQLSLTAI…SLREVADLIC (125 aa)) is the MI domain.

The protein belongs to the eukaryotic initiation factor 4G family. As to quaternary structure, EIF4F is a multi-subunit complex, the composition of which varies with external and internal environmental conditions. It is composed of at least EIF4A, EIF4E and EIF4G. Interacts directly with eIF4E. In higher plants two isoforms of EIF4F have been identified, named isoform EIF4F and isoform EIF(iso)4F. Isoform EIF4F has subunits p220 and p26, whereas isoform EIF(iso)4F has subunits p82 and p28.

Component of the protein complex eIF4F, which is involved in the recognition of the mRNA cap, ATP-dependent unwinding of 5'-terminal secondary structure and recruitment of mRNA to the ribosome. The polypeptide is Eukaryotic translation initiation factor 4G (Cucumis melo (Muskmelon)).